The sequence spans 245 residues: IVYGTVTTPGKYPWMVSIHERVKDVMKQACGGAILNENWIVTAAHCFDQPIILKDYEVYVGIVSWLHKNAPTVQKFQLSKIIIHDKYVKDGFANDIALIKTATPIDIKGSKYGVNGICFPSGATDPSGEATVIGWGMIRGGGPISAELRQVTLPLVPWQKCKQIYGHPDSEFEYIQVVPSMLCAGGNGKDACQFDSGGPLFQYDKKGVATLIGTVANGADCAYAHYPGMYMKVSAFRSWMDKVMT.

The Peptidase S1 domain maps to 1-245 (IVYGTVTTPG…FRSWMDKVMT (245 aa)). C30 and C46 are disulfide-bonded. Residues H45 and D95 each act as charge relay system in the active site. Disulfide bonds link C161/C183 and C192/C221. The Charge relay system role is filled by S196.

In terms of tissue distribution, expressed by the venom gland.

The protein localises to the secreted. Functionally, protease. Hydrolyzes gelatin and succinyl casein. This Phoneutria nigriventer (Brazilian armed spider) protein is U21-ctenitoxin-Pn1a.